Reading from the N-terminus, the 401-residue chain is Dual-specificity RNA methyltransferase RlmN (401 aa).

Catalysis depends on Glu114, which acts as the Proton acceptor. The region spanning 120 to 365 (DKGRGTLCVS…TMVRRTRGDD (246 aa)) is the Radical SAM core domain. Cys127 and Cys370 form a disulfide bridge. Positions 134, 138, and 141 each coordinate [4Fe-4S] cluster. S-adenosyl-L-methionine contacts are provided by residues 187 to 188 (GE), Ser219, 241 to 243 (SLH), and Asn327. Cys370 (S-methylcysteine intermediate) is an active-site residue.

It belongs to the radical SAM superfamily. RlmN family. [4Fe-4S] cluster serves as cofactor.

It is found in the cytoplasm. It carries out the reaction adenosine(2503) in 23S rRNA + 2 reduced [2Fe-2S]-[ferredoxin] + 2 S-adenosyl-L-methionine = 2-methyladenosine(2503) in 23S rRNA + 5'-deoxyadenosine + L-methionine + 2 oxidized [2Fe-2S]-[ferredoxin] + S-adenosyl-L-homocysteine. It catalyses the reaction adenosine(37) in tRNA + 2 reduced [2Fe-2S]-[ferredoxin] + 2 S-adenosyl-L-methionine = 2-methyladenosine(37) in tRNA + 5'-deoxyadenosine + L-methionine + 2 oxidized [2Fe-2S]-[ferredoxin] + S-adenosyl-L-homocysteine. In terms of biological role, specifically methylates position 2 of adenine 2503 in 23S rRNA and position 2 of adenine 37 in tRNAs. m2A2503 modification seems to play a crucial role in the proofreading step occurring at the peptidyl transferase center and thus would serve to optimize ribosomal fidelity. The protein is Dual-specificity RNA methyltransferase RlmN of Xanthomonas campestris pv. campestris (strain 8004).